The following is a 101-amino-acid chain: Small ribosomal subunit protein uS14 (101 aa).

Belongs to the universal ribosomal protein uS14 family. Part of the 30S ribosomal subunit. Contacts proteins S3 and S10.

Functionally, binds 16S rRNA, required for the assembly of 30S particles and may also be responsible for determining the conformation of the 16S rRNA at the A site. The protein is Small ribosomal subunit protein uS14 of Sodalis glossinidius (strain morsitans).